The sequence spans 511 residues: D-alanine--D-alanyl carrier protein ligase (511 aa).

152–153 (TS) provides a ligand contact to ATP. A D-alanine-binding site is contributed by Asp-199. Residue 294 to 299 (NAYGPT) coordinates ATP. Residue Val-303 participates in D-alanine binding. ATP-binding positions include Asp-385, 397–400 (YGGR), and Lys-499. Lys-499 lines the D-alanine pocket.

It belongs to the ATP-dependent AMP-binding enzyme family. DltA subfamily.

The protein localises to the cytoplasm. The enzyme catalyses holo-[D-alanyl-carrier protein] + D-alanine + ATP = D-alanyl-[D-alanyl-carrier protein] + AMP + diphosphate. Its pathway is cell wall biogenesis; lipoteichoic acid biosynthesis. Its function is as follows. Catalyzes the first step in the D-alanylation of lipoteichoic acid (LTA), the activation of D-alanine and its transfer onto the D-alanyl carrier protein (Dcp) DltC. In an ATP-dependent two-step reaction, forms a high energy D-alanyl-AMP intermediate, followed by transfer of the D-alanyl residue as a thiol ester to the phosphopantheinyl prosthetic group of the Dcp. D-alanylation of LTA plays an important role in modulating the properties of the cell wall in Gram-positive bacteria, influencing the net charge of the cell wall. The sequence is that of D-alanine--D-alanyl carrier protein ligase from Streptococcus agalactiae serotype V (strain ATCC BAA-611 / 2603 V/R).